The primary structure comprises 172 residues: Shikimate kinase (172 aa).

ATP is bound at residue 11-16 (GAGKST). Ser-15 serves as a coordination point for Mg(2+). Residues Asp-33, Arg-57, and Gly-79 each contribute to the substrate site. Residue Arg-117 participates in ATP binding. Arg-136 contributes to the substrate binding site. Arg-153 contacts ATP.

It belongs to the shikimate kinase family. As to quaternary structure, monomer. The cofactor is Mg(2+).

The protein resides in the cytoplasm. The catalysed reaction is shikimate + ATP = 3-phosphoshikimate + ADP + H(+). The protein operates within metabolic intermediate biosynthesis; chorismate biosynthesis; chorismate from D-erythrose 4-phosphate and phosphoenolpyruvate: step 5/7. Its function is as follows. Catalyzes the specific phosphorylation of the 3-hydroxyl group of shikimic acid using ATP as a cosubstrate. The sequence is that of Shikimate kinase from Pseudomonas entomophila (strain L48).